The chain runs to 132 residues: uncharacterized protein (132 aa).

WD repeat units follow at residues 14–53 (DLQDDISSVCCSPCNRYIIIASGNNCQHIYYLCATNLEIL) and 58–97 (AHDDSIVHLVSTLDGKYIVSSGLDGLIKIWNFKTANLANV).

This is an uncharacterized protein from Acanthamoeba polyphaga (Amoeba).